Reading from the N-terminus, the 461-residue chain is Steroidogenic factor 1 (461 aa).

Positions 10–85 (DELCPVCGDK…VGMRLEAVRA (76 aa)) form a DNA-binding region, nuclear receptor. Residues 13 to 33 (CPVCGDKVSGYHYGLLTCESC) form an NR C4-type zinc finger. Residues Lys-34, Lys-38, and Lys-72 each carry the N6-acetyllysine modification. The segment at 49–73 (CTESQSCKIDKTQRKRCPFCRFQKC) adopts an NR C4-type zinc-finger fold. Residue Lys-119 forms a Glycyl lysine isopeptide (Lys-Gly) (interchain with G-Cter in SUMO) linkage. Positions 119-150 (KLETGPPMGVAPPPPPPPDYMLPPGLHAPEPK) are disordered. Residues 127-139 (GVAPPPPPPPDYM) show a composition bias toward pro residues. Lys-194 is covalently cross-linked (Glycyl lysine isopeptide (Lys-Gly) (interchain with G-Cter in SUMO)). Position 203 is a phosphoserine; by CDK7 (Ser-203). The 238-residue stretch at 222–459 (GVPELIVQLL…NLLIEMLQAK (238 aa)) folds into the NR LBD domain. Residues 230 to 461 (LLQLEPDEDQ…LIEMLQAKQT (232 aa)) form an important for dimerization region. 3 residues coordinate a 1,2-diacyl-sn-glycero-3-phosphocholine: Gly-341, Tyr-436, and Lys-440.

The protein belongs to the nuclear hormone receptor family. NR5 subfamily. Binds DNA as a monomer. Part of a complex consisting of SFPQ, NONO and NR5A1. Interacts with NR0B2, NCOA2 and PPARGC1A. Interacts with DGKQ and CDK7. Binds to and activated by HIPK3. In terms of processing, acetylation stimulates the transcriptional activity. Post-translationally, sumoylation reduces CDK7-mediated phosphorylation on Ser-203. Phosphorylated on Ser-203 by CDK7. This phosphorylation promotes transcriptional activity.

It localises to the nucleus. Its function is as follows. Transcriptional activator. Seems to be essential for sexual differentiation and formation of the primary steroidogenic tissues. Binds to the Ad4 site found in the promoter region of steroidogenic P450 genes such as CYP11A, CYP11B and CYP21B. Also regulates the AMH/Muellerian inhibiting substance gene as well as the AHCH and STAR genes. 5'-YCAAGGYC-3' and 5'-RRAGGTCA-3' are the consensus sequences for the recognition by NR5A1. The SFPQ-NONO-NR5A1 complex binds to the CYP17 promoter and regulates basal and cAMP-dependent transcriptional activity. Binds phosphatidylcholine and phospholipids with a phosphatidylinositol (PI) headgroup, in particular PI(3,4)P2 and PI(3,4,5)P3. Activated by the phosphorylation of NR5A1 by HIPK3 leading to increased steroidogenic gene expression upon cAMP signaling pathway stimulation. The polypeptide is Steroidogenic factor 1 (NR5A1) (Sus scrofa (Pig)).